A 187-amino-acid polypeptide reads, in one-letter code: UPF0301 protein SO_3346 (187 aa).

This sequence belongs to the UPF0301 (AlgH) family.

The chain is UPF0301 protein SO_3346 from Shewanella oneidensis (strain ATCC 700550 / JCM 31522 / CIP 106686 / LMG 19005 / NCIMB 14063 / MR-1).